Here is a 146-residue protein sequence, read N- to C-terminus: Benzoylsuccinyl-CoA thiolase subunit BbsA (146 aa).

Residues Cys-42, Cys-45, Cys-55, and Cys-58 each coordinate Zn(2+).

It belongs to the BbsA family. Heterotetramer composed of two BbsA subunits and two BbsB subunits. Both BbsA and BbsB are essential for enzymatic activity.

The enzyme catalyses (S)-2-benzoylsuccinyl-CoA + CoA = benzoyl-CoA + succinyl-CoA. Its pathway is xenobiotic degradation; toluene degradation. Its function is as follows. Component of the BbsAB thiolase complex, which catalyzes the thiolytic cleavage of (S)-2-benzoylsuccinyl-CoA to succinyl-CoA and benzoyl-CoA, the final step of anaerobic toluene metabolism. The BbsA subunit critically contributes to an induced-fit process for productive binding of a CoA substrate into the active site of BbsB. In Geobacter metallireducens (strain ATCC 53774 / DSM 7210 / GS-15), this protein is Benzoylsuccinyl-CoA thiolase subunit BbsA.